The chain runs to 937 residues: Leucine--tRNA ligase (937 aa).

Residues 34-44 (PYPSGAMHIGH) carry the 'HIGH' region motif. The short motif at 609–613 (KMSSS) is the 'KMSKS' region element.

It belongs to the class-I aminoacyl-tRNA synthetase family.

It localises to the cytoplasm. It catalyses the reaction tRNA(Leu) + L-leucine + ATP = L-leucyl-tRNA(Leu) + AMP + diphosphate. This chain is Leucine--tRNA ligase, found in Methanothermobacter thermautotrophicus (strain ATCC 29096 / DSM 1053 / JCM 10044 / NBRC 100330 / Delta H) (Methanobacterium thermoautotrophicum).